We begin with the raw amino-acid sequence, 212 residues long: ER lumen protein-retaining receptor 2 (212 aa).

The Lumenal portion of the chain corresponds to 1 to 4; that stretch reads MNVF. A helical transmembrane segment spans residues 5–24; that stretch reads RLSGDLCHLAAIIILLLKIW. Topologically, residues 25-32 are cytoplasmic; it reads NSRSCAGI. A helical transmembrane segment spans residues 33–52; the sequence is SGKSQLLFAMVFTTRYLDLF. Positions 47–48 are interaction with the K-D-E-L motif on target proteins; sequence RY. The Lumenal segment spans residues 53–58; sequence TSFISL. A helical membrane pass occupies residues 59-79; sequence YNTSMKVIYMGCAYATVYLIY. Topologically, residues 80-92 are cytoplasmic; it reads MKFKATYDGNHDT. A helical transmembrane segment spans residues 93 to 110; the sequence is FRVEFLVVPVGGLSVLVN. Residues 111–116 lie on the Lumenal side of the membrane; the sequence is HDFSPL. The chain crosses the membrane as a helical span at residues 117-135; that stretch reads EILWTFSIYLESVAILPQL. Over 136 to 149 the chain is Cytoplasmic; the sequence is FMISKTGEAETITT. The chain crosses the membrane as a helical span at residues 150 to 168; sequence HYLFFLGLYRALYLFNWIW. The segment at 159–169 is interaction with the K-D-E-L motif on target proteins; that stretch reads RALYLFNWIWR. Residues 169–178 are Lumenal-facing; it reads RFSFEGFFDL. A helical transmembrane segment spans residues 179–199; that stretch reads IAIVAGVVQTILYCDFFYLYV. The Cytoplasmic portion of the chain corresponds to 200-212; the sequence is TKVLKGKKLSLPA. An important for recycling of cargo proteins with the sequence motif K-D-E-L from the Golgi to the endoplasmic reticulum region spans residues 204–207; sequence KGKK.

It belongs to the ERD2 family.

The protein localises to the endoplasmic reticulum membrane. The protein resides in the golgi apparatus membrane. Its subcellular location is the cytoplasmic vesicle. It is found in the COPI-coated vesicle membrane. Functionally, receptor for the C-terminal sequence motif K-D-E-L that is present on endoplasmic reticulum resident proteins and that mediates their recycling from the Golgi back to the endoplasmic reticulum. Binding is pH dependent, and is optimal at pH 5-5.4. This chain is ER lumen protein-retaining receptor 2 (kdelr2), found in Xenopus laevis (African clawed frog).